The primary structure comprises 1533 residues: Glycogen debranching enzyme (1533 aa).

Ser-64 bears the Phosphoserine mark. Residues Asp-527, His-530, and Asp-628 contribute to the active site.

It belongs to the glycogen debranching enzyme family. Monomer. Interacts with NHLRC1/malin. In terms of processing, ubiquitinated. In terms of tissue distribution, ubiquitous. Expressed in striated skeletal muscle, heart, liver, spleen, skin, spinal cord, lung, kidney and testicle.

It is found in the cytoplasm. It carries out the reaction Transfers a segment of a (1-&gt;4)-alpha-D-glucan to a new position in an acceptor, which may be glucose or a (1-&gt;4)-alpha-D-glucan.. It catalyses the reaction Hydrolysis of (1-&gt;6)-alpha-D-glucosidic branch linkages in glycogen phosphorylase limit dextrin.. Its function is as follows. Multifunctional enzyme acting as 1,4-alpha-D-glucan:1,4-alpha-D-glucan 4-alpha-D-glycosyltransferase and amylo-1,6-glucosidase in glycogen degradation. This chain is Glycogen debranching enzyme, found in Equus caballus (Horse).